Reading from the N-terminus, the 502-residue chain is Zinc finger C3HC-type protein 1 (502 aa).

N-acetylalanine is present on Ala-2. Ser-24 is modified (phosphoserine). Thr-28 bears the Phosphothreonine mark. The segment at 35–74 (LIDEGIAPEEGGVDAQDTSATSQSVNGSPQAEQPSLESTS) is disordered. Over residues 50–72 (QDTSATSQSVNGSPQAEQPSLES) the composition is skewed to polar residues. Ser-58 and Ser-62 each carry phosphoserine. At Thr-84 the chain carries Phosphothreonine. The C3HC-type zinc finger occupies 102 to 156 (CAKYGWVTVECDMLKCSSCQAFLCASLQPAFDFDRYKQRCAELKKALCTAHEKFC). Residues 302–423 (SSPIPGLEGR…SSRSFFDPTS (122 aa)) form a disordered region. Phosphoserine is present on residues Ser-321 and Ser-329. Thr-333 is subject to Phosphothreonine. 5 positions are modified to phosphoserine: Ser-338, Ser-344, Ser-354, Ser-359, and Ser-370. The span at 351–360 (RTRSWDSSSP) shows a compositional bias: polar residues. Residues 371–380 (PTTRTRPVTR) are compositionally biased toward low complexity. Ser-381 is subject to Phosphoserine. Residue Thr-384 is modified to Phosphothreonine. Ser-395 carries the phosphoserine modification. The Nuclear localization signal motif lies at 396 to 402 (PLRKAKR). Phosphoserine is present on residues Ser-407 and Ser-483. Positions 407 to 422 (SSSSSDTSSRSFFDPT) are enriched in low complexity.

In terms of assembly, interacts with TPR; this interaction mediates ZC3HC1 nuclear envelopes (NE)-association but also required for proper positioning of a substantial amount of TPR at the nuclear basket (NB). Post-translationally, phosphorylated. May also be weakly phosphorylated on Tyr residues.

The protein resides in the nucleus. It is found in the nucleus envelope. Functionally, required for proper positioning of a substantial amount of TPR at the nuclear basket (NB) through interaction with TPR. The polypeptide is Zinc finger C3HC-type protein 1 (ZC3HC1) (Pongo abelii (Sumatran orangutan)).